The primary structure comprises 201 residues: Molybdenum cofactor guanylyltransferase (201 aa).

GTP is bound by residues 14–16, Lys31, and Asp104; that span reads LAG. Asp104 is a Mg(2+) binding site.

Belongs to the MobA family. In terms of assembly, monomer. Mg(2+) is required as a cofactor.

Its subcellular location is the cytoplasm. The catalysed reaction is Mo-molybdopterin + GTP + H(+) = Mo-molybdopterin guanine dinucleotide + diphosphate. Transfers a GMP moiety from GTP to Mo-molybdopterin (Mo-MPT) cofactor (Moco or molybdenum cofactor) to form Mo-molybdopterin guanine dinucleotide (Mo-MGD) cofactor. The sequence is that of Molybdenum cofactor guanylyltransferase from Helicobacter pylori (strain ATCC 700392 / 26695) (Campylobacter pylori).